A 534-amino-acid polypeptide reads, in one-letter code: NAD(P)H-quinone oxidoreductase subunit 2 (534 aa).

Helical transmembrane passes span 15-35 (ILPE…DLIL), 42-62 (WIGY…YFQW), 79-99 (LSIV…LMSI), 109-129 (LAEF…LSGA), 132-152 (LVMI…LTGY), 167-187 (LLIG…LYGL), 210-230 (LGLV…ISAA), 244-264 (PTPV…ALAI), 280-300 (FVFT…ALAQ), 306-326 (MLAY…IAGT), 334-354 (IFYL…IILF), 378-398 (LGLS…GFFG), 410-432 (GLYW…YIRV), and 466-486 (VGLV…NPLF).

This sequence belongs to the complex I subunit 2 family. NDH-1 can be composed of about 15 different subunits; different subcomplexes with different compositions have been identified which probably have different functions.

The protein localises to the cellular thylakoid membrane. The enzyme catalyses a plastoquinone + NADH + (n+1) H(+)(in) = a plastoquinol + NAD(+) + n H(+)(out). It catalyses the reaction a plastoquinone + NADPH + (n+1) H(+)(in) = a plastoquinol + NADP(+) + n H(+)(out). In terms of biological role, NDH-1 shuttles electrons from an unknown electron donor, via FMN and iron-sulfur (Fe-S) centers, to quinones in the respiratory and/or the photosynthetic chain. The immediate electron acceptor for the enzyme in this species is believed to be plastoquinone. Couples the redox reaction to proton translocation, and thus conserves the redox energy in a proton gradient. Cyanobacterial NDH-1 also plays a role in inorganic carbon-concentration. In Nostoc punctiforme (strain ATCC 29133 / PCC 73102), this protein is NAD(P)H-quinone oxidoreductase subunit 2.